The following is a 473-amino-acid chain: Sarcalumenin (473 aa).

An N-terminal signal peptide occupies residues 1–20 (MRALVLLGCLLASLLFSGQA). In terms of domain architecture, Dynamin-type G spans 90–331 (ITSKPMVLFL…IENRLENKIA (242 aa)). The segment at 100 to 107 (GPWSVGKS) is G1 motif. The tract at residues 128-129 (EP) is G2 motif. The tract at residues 190–193 (DTPG) is G3 motif. The interval 255–258 (NKAD) is G4 motif. Pro-278 is a region of interest (G5 motif). N-linked (GlcNAc...) asparagine glycans are attached at residues Asn-281 and Asn-389.

Belongs to the TRAFAC class dynamin-like GTPase superfamily. Dynamin/Fzo/YdjA family. N-glycosylated.

It is found in the sarcoplasmic reticulum lumen. Its subcellular location is the sarcoplasmic reticulum membrane. This Homo sapiens (Human) protein is Sarcalumenin (SRL).